The following is a 344-amino-acid chain: Acetylpolyamine amidohydrolase 2 (344 aa).

Histidine 159 serves as the catalytic Proton donor/acceptor. Zn(2+) is bound by residues aspartate 195, histidine 197, and aspartate 284.

It belongs to the histone deacetylase family. As to quaternary structure, homodimer. Zn(2+) is required as a cofactor.

The enzyme catalyses N-acetylputrescine + H2O = putrescine + acetate. It catalyses the reaction N-acetylcadaverine + H2O = cadaverine + acetate. It functions in the pathway amine and polyamine metabolism. Functionally, catalyzes the deacetylation of acetylated polyamines such as N-acetylputrescine and N-acetylcadaverine. Plays an important role in the metabolism of acetylated polyamines in P.aeruginosa. Is involved in the degradation pathways of N-acetylputrescine and N-acetylcadaverine, that allow P.aeruginosa to utilize these acetylpolyamines as a carbon source under glucose starvation. Shows nearly no activity against N(1)-acetylspermine and N(1)-acetylspermidine. Can also hydrolyze artificial trifluoroacetylated lysine-derivative, and to a lesser extent, acetylated lysine-derivative. The protein is Acetylpolyamine amidohydrolase 2 of Pseudomonas aeruginosa (strain ATCC 15692 / DSM 22644 / CIP 104116 / JCM 14847 / LMG 12228 / 1C / PRS 101 / PAO1).